A 332-amino-acid polypeptide reads, in one-letter code: L-lactate dehydrogenase A-like 6A (332 aa).

A2 carries the N-acetylalanine modification. N6-acetyllysine; alternate is present on residues K5 and K57. At K5 the chain carries N6-succinyllysine; alternate. An NAD(+)-binding site is contributed by 29 to 57 (GSVGVACAISILLKGLSDELVLVDVDEGK). K57 participates in a covalent cross-link: Glycyl lysine isopeptide (Lys-Gly) (interchain with G-Cter in SUMO2); alternate. K81 carries the N6-acetyllysine modification. An NAD(+)-binding site is contributed by R99. R106 contacts substrate. The residue at position 118 (K118) is an N6-acetyllysine; alternate. K118 carries the post-translational modification N6-succinyllysine; alternate. An NAD(+)-binding site is contributed by N138. 2 residues coordinate substrate: N138 and R169. Catalysis depends on H193, which acts as the Proton acceptor. K232 carries the N6-acetyllysine modification. Y239 is subject to Phosphotyrosine. An N6-acetyllysine modification is found at K243. Residue T248 participates in substrate binding. Position 309 is a phosphothreonine (T309). At K318 the chain carries N6-acetyllysine; alternate. K318 is modified (N6-succinyllysine; alternate). The residue at position 322 (T322) is a Phosphothreonine.

Belongs to the LDH/MDH superfamily. LDH family. Testis-specific.

Its subcellular location is the cytoplasm. The catalysed reaction is (S)-lactate + NAD(+) = pyruvate + NADH + H(+). It functions in the pathway fermentation; pyruvate fermentation to lactate; (S)-lactate from pyruvate: step 1/1. Functionally, catalyzes the interconversion of L-lactate and pyruvate with nicotinamide adenine dinucleotide NAD(+) as a coenzyme. Significantly increases the transcriptional activity of JUN, when overexpressed. The sequence is that of L-lactate dehydrogenase A-like 6A (LDHAL6A) from Homo sapiens (Human).